Here is a 262-residue protein sequence, read N- to C-terminus: ATP synthase subunit a (262 aa).

5 helical membrane-spanning segments follow: residues 26–46 (VHID…FVFS), 86–106 (VAPL…IDLI), 130–150 (DISA…FYTI), 204–226 (LIFI…GIPL), and 240–260 (LQAF…YNKA).

This sequence belongs to the ATPase A chain family. In terms of assembly, F-type ATPases have 2 components, CF(1) - the catalytic core - and CF(0) - the membrane proton channel. CF(1) has five subunits: alpha(3), beta(3), gamma(1), delta(1), epsilon(1). CF(0) has three main subunits: a(1), b(2) and c(9-12). The alpha and beta chains form an alternating ring which encloses part of the gamma chain. CF(1) is attached to CF(0) by a central stalk formed by the gamma and epsilon chains, while a peripheral stalk is formed by the delta and b chains.

It is found in the cell inner membrane. In terms of biological role, key component of the proton channel; it plays a direct role in the translocation of protons across the membrane. In Haemophilus influenzae (strain 86-028NP), this protein is ATP synthase subunit a.